Consider the following 144-residue polypeptide: Urease subunit beta (144 aa).

A compositionally biased stretch (low complexity) spans 110–119; it reads HAAPAAPAIP. The interval 110 to 144 is disordered; the sequence is HAAPAAPAIPARHESAAGDAPSPLKERAGFDNETR. Residues 133–144 show a composition bias toward basic and acidic residues; sequence LKERAGFDNETR.

It belongs to the urease beta subunit family. As to quaternary structure, heterotrimer of UreA (gamma), UreB (beta) and UreC (alpha) subunits. Three heterotrimers associate to form the active enzyme.

The protein resides in the cytoplasm. The enzyme catalyses urea + 2 H2O + H(+) = hydrogencarbonate + 2 NH4(+). The protein operates within nitrogen metabolism; urea degradation; CO(2) and NH(3) from urea (urease route): step 1/1. The chain is Urease subunit beta from Micrococcus luteus (strain ATCC 4698 / DSM 20030 / JCM 1464 / CCM 169 / CCUG 5858 / IAM 1056 / NBRC 3333 / NCIMB 9278 / NCTC 2665 / VKM Ac-2230) (Micrococcus lysodeikticus).